The following is a 364-amino-acid chain: Methylenetetrahydrofolate--tRNA-(uracil-5-)-methyltransferase TrmFO (364 aa).

Residue 11 to 16 (GAGLAG) coordinates FAD. Positions 335-352 (SYLNQPCSSANDPTSSLL) are enriched in polar residues. Residues 335–364 (SYLNQPCSSANDPTSSLLDRSPAQRDIPLQ) are disordered.

It belongs to the MnmG family. TrmFO subfamily. Requires FAD as cofactor.

The protein localises to the cytoplasm. It catalyses the reaction uridine(54) in tRNA + (6R)-5,10-methylene-5,6,7,8-tetrahydrofolate + NADH + H(+) = 5-methyluridine(54) in tRNA + (6S)-5,6,7,8-tetrahydrofolate + NAD(+). The catalysed reaction is uridine(54) in tRNA + (6R)-5,10-methylene-5,6,7,8-tetrahydrofolate + NADPH + H(+) = 5-methyluridine(54) in tRNA + (6S)-5,6,7,8-tetrahydrofolate + NADP(+). Catalyzes the folate-dependent formation of 5-methyl-uridine at position 54 (M-5-U54) in all tRNAs. The polypeptide is Methylenetetrahydrofolate--tRNA-(uracil-5-)-methyltransferase TrmFO (Prochlorococcus marinus (strain MIT 9313)).